The chain runs to 144 residues: Ribonuclease H (144 aa).

One can recognise an RNase H type-1 domain in the interval 1 to 141 (MDKIDIYSDG…ADALANRGVE (141 aa)). Residues Asp-9, Glu-47, Asp-69, and Asp-133 each coordinate Mg(2+).

It belongs to the RNase H family. As to quaternary structure, monomer. Requires Mg(2+) as cofactor.

The protein resides in the cytoplasm. The catalysed reaction is Endonucleolytic cleavage to 5'-phosphomonoester.. Functionally, endonuclease that specifically degrades the RNA of RNA-DNA hybrids. The protein is Ribonuclease H of Janthinobacterium sp. (strain Marseille) (Minibacterium massiliensis).